The following is a 453-amino-acid chain: Pup--protein ligase (453 aa).

Glu9 contributes to the Mg(2+) binding site. An ATP-binding site is contributed by Arg53. Tyr55 serves as a coordination point for Mg(2+). Asp57 serves as the catalytic Proton acceptor. Glu63 is a binding site for Mg(2+). ATP is bound by residues Thr66 and Trp420.

It belongs to the Pup ligase/Pup deamidase family. Pup-conjugating enzyme subfamily.

The enzyme catalyses ATP + [prokaryotic ubiquitin-like protein]-L-glutamate + [protein]-L-lysine = ADP + phosphate + N(6)-([prokaryotic ubiquitin-like protein]-gamma-L-glutamyl)-[protein]-L-lysine.. It functions in the pathway protein degradation; proteasomal Pup-dependent pathway. It participates in protein modification; protein pupylation. Functionally, catalyzes the covalent attachment of the prokaryotic ubiquitin-like protein modifier Pup to the proteasomal substrate proteins, thereby targeting them for proteasomal degradation. This tagging system is termed pupylation. The ligation reaction involves the side-chain carboxylate of the C-terminal glutamate of Pup and the side-chain amino group of a substrate lysine. The protein is Pup--protein ligase of Kineococcus radiotolerans (strain ATCC BAA-149 / DSM 14245 / SRS30216).